The following is a 263-amino-acid chain: Tryptophan synthase alpha chain (263 aa).

Catalysis depends on proton acceptor residues glutamate 41 and aspartate 52.

Belongs to the TrpA family. As to quaternary structure, tetramer of two alpha and two beta chains.

The enzyme catalyses (1S,2R)-1-C-(indol-3-yl)glycerol 3-phosphate + L-serine = D-glyceraldehyde 3-phosphate + L-tryptophan + H2O. It participates in amino-acid biosynthesis; L-tryptophan biosynthesis; L-tryptophan from chorismate: step 5/5. The alpha subunit is responsible for the aldol cleavage of indoleglycerol phosphate to indole and glyceraldehyde 3-phosphate. The chain is Tryptophan synthase alpha chain from Geobacillus sp. (strain WCH70).